Reading from the N-terminus, the 126-residue chain is MAFSGIWNVYSQENYEPFLKAVGVPDDIIKVAKDIKPVIEIQQNGNDFVVTLKTPKNSQSNSFTVGQEAEITSAGGKKFKVTVNLEGGKLICKSDTFSHIQEVNGDEMVEQITIGSTTLIRKSKRS.

The residue at position 2 (Ala-2) is an N-acetylalanine. Cholate contacts are provided by Lys-77, His-99, and Gln-101.

This sequence belongs to the calycin superfamily. Fatty-acid binding protein (FABP) family.

The protein resides in the cytoplasm. In terms of biological role, binds free fatty acids and their coenzyme A derivatives, bilirubin, and some other small molecules in the cytoplasm. May be involved in intracellular lipid transport. The protein is Fatty acid-binding protein, liver (fabp1) of Aquarana catesbeiana (American bullfrog).